Reading from the N-terminus, the 421-residue chain is MEGSPVTSVRLSSVVPASVVGENKPRQLTPMDLAMKLHYVRAVYFFKGARDFTVADVKNTMFTLQSLLQSYHHVSGRIRMSDNDNDTSAAAIPYIRCNDSGIRVVEANVEEFTVEKWLELDDRSIDHRFLVYDHVLGPDLTFSPLVFLQITQFKCGGLCIGLSWAHILGDVFSASTFMKTLGQLVSGHAPTKPVYPKTPELTSHARNDGEAISIEKIDSVGEYWLLTNKCKMGRHIFNFSLNHIDSLMAKYTTRDQPFSEVDILYALIWKSLLNIRGETNTNVITICDRKKSSTCWNEDLVISVVEKNDEMVGISELAALIAGEKREENGAIKRMIEQDKGSSDFFTYGANLTFVNLDEIDMYELEINGGKPDFVNYTIHGVGDKGVVLVFPKQNFARIVSVVMPEEDLAKLKEEVTNMII.

Met1 carries the N-acetylmethionine modification.

It belongs to the plant acyltransferase family. Expressed at high levels in the epidermis of stems and young siliques. Expressed in flowers.

It localises to the endoplasmic reticulum. It is found in the nucleus. Its function is as follows. Involved in biosynthesis of the epicuticular wax. Plays a role in very-long-chain fatty acid (VLCFA) biosynthesis and is required for C28 fatty acid elongation in stem. Despite its classification as a BAHD acyltransferase based on sequence homology, CER2 does not seem to share the catalytic mechanism of the members of the BAHD family. The polypeptide is Protein ECERIFERUM 2 (CER2) (Arabidopsis thaliana (Mouse-ear cress)).